Here is a 357-residue protein sequence, read N- to C-terminus: Phenylalanine--tRNA ligase alpha subunit (357 aa).

Glu278 provides a ligand contact to Mg(2+).

Belongs to the class-II aminoacyl-tRNA synthetase family. Phe-tRNA synthetase alpha subunit type 1 subfamily. Tetramer of two alpha and two beta subunits. The cofactor is Mg(2+).

The protein resides in the cytoplasm. It carries out the reaction tRNA(Phe) + L-phenylalanine + ATP = L-phenylalanyl-tRNA(Phe) + AMP + diphosphate + H(+). The chain is Phenylalanine--tRNA ligase alpha subunit from Albidiferax ferrireducens (strain ATCC BAA-621 / DSM 15236 / T118) (Rhodoferax ferrireducens).